The following is a 528-amino-acid chain: Folylpolyglutamate synthase (528 aa).

104 to 107 (GKGG) is an ATP binding site. Positions 134, 208, and 236 each coordinate Mg(2+). ATP-binding residues include arginine 351 and aspartate 365.

Belongs to the folylpolyglutamate synthase family. The cofactor is a monovalent cation.

The protein localises to the mitochondrion inner membrane. It localises to the mitochondrion matrix. It is found in the cytoplasm. It catalyses the reaction (6S)-5,6,7,8-tetrahydrofolyl-(gamma-L-Glu)(n) + L-glutamate + ATP = (6S)-5,6,7,8-tetrahydrofolyl-(gamma-L-Glu)(n+1) + ADP + phosphate + H(+). The protein operates within cofactor biosynthesis; tetrahydrofolylpolyglutamate biosynthesis. Its function is as follows. Catalyzes conversion of folates to polyglutamate derivatives allowing concentration of folate compounds in the cell and the intracellular retention of these cofactors, which are important substrates for most of the folate-dependent enzymes that are involved in one-carbon transfer reactions involved in purine, pyrimidine and amino acid synthesis. The protein is Folylpolyglutamate synthase (met-6) of Neurospora crassa (strain ATCC 24698 / 74-OR23-1A / CBS 708.71 / DSM 1257 / FGSC 987).